Reading from the N-terminus, the 431-residue chain is Enolase (431 aa).

Glutamine 164 contributes to the (2R)-2-phosphoglycerate binding site. Glutamate 206 acts as the Proton donor in catalysis. The Mg(2+) site is built by aspartate 243, glutamate 288, and aspartate 315. Residues lysine 340, arginine 369, serine 370, and lysine 391 each coordinate (2R)-2-phosphoglycerate. The active-site Proton acceptor is the lysine 340.

Belongs to the enolase family. Requires Mg(2+) as cofactor.

The protein localises to the cytoplasm. The protein resides in the secreted. It is found in the cell surface. It carries out the reaction (2R)-2-phosphoglycerate = phosphoenolpyruvate + H2O. It participates in carbohydrate degradation; glycolysis; pyruvate from D-glyceraldehyde 3-phosphate: step 4/5. Functionally, catalyzes the reversible conversion of 2-phosphoglycerate (2-PG) into phosphoenolpyruvate (PEP). It is essential for the degradation of carbohydrates via glycolysis. This chain is Enolase, found in Fervidobacterium nodosum (strain ATCC 35602 / DSM 5306 / Rt17-B1).